A 307-amino-acid polypeptide reads, in one-letter code: Universal stress protein A family protein C25B2.10 (307 aa).

The tract at residues 1–63 is disordered; it reads MSESAPAGSK…RSSMEQPTFR (63 aa). The span at 21-30 shows a compositional bias: basic and acidic residues; sequence PEPRTSKDQQ. Serine 44 is modified (phosphoserine). A Phosphothreonine modification is found at threonine 48. A phosphoserine mark is found at serine 98 and serine 102.

The protein belongs to the universal stress protein A family.

It localises to the barrier septum. It is found in the cell tip. This is Universal stress protein A family protein C25B2.10 from Schizosaccharomyces pombe (strain 972 / ATCC 24843) (Fission yeast).